Reading from the N-terminus, the 637-residue chain is tRNA uridine 5-carboxymethylaminomethyl modification enzyme MnmG (637 aa).

Residues 15–20 (GAGHAG), I127, and S182 contribute to the FAD site. 276–290 (GPRYCPSIEDKIVRF) lines the NAD(+) pocket. Q373 contributes to the FAD binding site.

It belongs to the MnmG family. As to quaternary structure, homodimer. Heterotetramer of two MnmE and two MnmG subunits. Requires FAD as cofactor.

Its subcellular location is the cytoplasm. NAD-binding protein involved in the addition of a carboxymethylaminomethyl (cmnm) group at the wobble position (U34) of certain tRNAs, forming tRNA-cmnm(5)s(2)U34. This Streptococcus pneumoniae serotype 4 (strain ATCC BAA-334 / TIGR4) protein is tRNA uridine 5-carboxymethylaminomethyl modification enzyme MnmG.